A 573-amino-acid chain; its full sequence is Sulfite reductase [NADPH] hemoprotein beta-component (573 aa).

Residues C438, C444, C483, and C487 each coordinate [4Fe-4S] cluster. Position 487 (C487) interacts with siroheme.

This sequence belongs to the nitrite and sulfite reductase 4Fe-4S domain family. As to quaternary structure, alpha(8)-beta(8). The alpha component is a flavoprotein, the beta component is a hemoprotein. Siroheme serves as cofactor. Requires [4Fe-4S] cluster as cofactor.

The catalysed reaction is hydrogen sulfide + 3 NADP(+) + 3 H2O = sulfite + 3 NADPH + 4 H(+). The protein operates within sulfur metabolism; hydrogen sulfide biosynthesis; hydrogen sulfide from sulfite (NADPH route): step 1/1. Functionally, component of the sulfite reductase complex that catalyzes the 6-electron reduction of sulfite to sulfide. This is one of several activities required for the biosynthesis of L-cysteine from sulfate. The polypeptide is Sulfite reductase [NADPH] hemoprotein beta-component (Staphylococcus haemolyticus (strain JCSC1435)).